A 147-amino-acid chain; its full sequence is Hemoglobin subunit epsilon-2 (147 aa).

One can recognise a Globin domain in the interval 3–147 (HFTTEENVAV…VANALTHKYH (145 aa)). Heme b is bound by residues tyrosine 64 and histidine 93.

The protein belongs to the globin family. As to expression, red blood cells.

Functionally, hemoglobin epsilon chain is a beta-type chain found in early embryos. This chain is Hemoglobin subunit epsilon-2 (HBE2), found in Bos taurus (Bovine).